The following is a 547-amino-acid chain: Solute carrier family 22 member 7 (547 aa).

12 helical membrane-spanning segments follow: residues 21 to 41, 145 to 165, 173 to 193, 203 to 223, 233 to 253, 258 to 278, 345 to 365, 374 to 396, 403 to 423, 431 to 451, 465 to 485, and 492 to 512; these read VALL…PIFL, ATST…GYLS, LLLV…ASVS, LTGT…LEWL, VLSS…GYLI, WLLL…WWVP, ISLC…GLSL, VYQT…YLSV, LTLA…LLVS, TALA…AYLF, MGLT…AALL, and LPKL…LLLP. Residues 521 to 547 are disordered; sequence ETIQDVERKSAPSSLQEEEMPMKQVQD.

This sequence belongs to the major facilitator (TC 2.A.1) superfamily. Organic cation transporter (TC 2.A.1.19) family.

The protein localises to the basolateral cell membrane. Its subcellular location is the apical cell membrane. It is found in the cell membrane. The enzyme catalyses orotate(out) + L-glutamate(in) = orotate(in) + L-glutamate(out). The catalysed reaction is 3',5'-cyclic GMP(in) = 3',5'-cyclic GMP(out). It carries out the reaction GMP(in) = GMP(out). It catalyses the reaction 2'-deoxyguanosine(in) = 2'-deoxyguanosine(out). The enzyme catalyses GDP(in) = GDP(out). The catalysed reaction is guanosine(in) = guanosine(out). It carries out the reaction GTP(in) = GTP(out). It catalyses the reaction 3',5'-cyclic AMP(in) = 3',5'-cyclic AMP(out). The enzyme catalyses creatinine(in) = creatinine(out). The catalysed reaction is prostaglandin E2(out) = prostaglandin E2(in). It carries out the reaction 2-oxoglutarate(in) = 2-oxoglutarate(out). It catalyses the reaction glutarate(in) = glutarate(out). The enzyme catalyses urate(out) = urate(in). The catalysed reaction is estrone 3-sulfate(out) = estrone 3-sulfate(in). Its function is as follows. Functions as a Na(+)-independent bidirectional multispecific transporter. Contributes to the renal and hepatic elimination of endogenous organic compounds from the systemic circulation into the urine and bile, respectively. Capable of transporting a wide range of purine and pyrimidine nucleobases, nucleosides and nucleotides, with cGMP, 2'deoxyguanosine and GMP being the preferred substrates. Functions as a pH- and chloride-independent cGMP bidirectional facilitative transporter that can regulate both intracellular and extracellular levels of cGMP and may be involved in cGMP signaling pathways. Mediates orotate/glutamate bidirectional exchange and most likely display a physiological role in hepatic release of glutamate into the blood. Involved in renal secretion and possible reabsorption of creatinine. Able to uptake prostaglandin E2 (PGE2) and may contribute to PGE2 renal excretion. Also transports alpha-ketoglutarate and urate. Apart from the orotate/glutamate exchange, the counterions for the uptake of other SLC22A7/OAT2 substrates remain to be identified. This Sus scrofa (Pig) protein is Solute carrier family 22 member 7 (SLC22A7).